Here is a 1256-residue protein sequence, read N- to C-terminus: Nephrin (1256 aa).

The signal sequence occupies residues 1 to 35; the sequence is MGAKEATVRGPGASPVHRTCHLIPLLLAGMLTTGL. Over 36 to 1078 the chain is Extracellular; the sequence is AQSPVPTSAP…PGPPRLPLLP (1043 aa). Ig-like C2-type domains lie at 39-144, 149-247, 256-347, 354-448, 454-554, and 558-649; these read PVPT…VILS, PKVL…ASFT, PPVI…RSIT, PSAV…KSLT, PAQK…TQLV, and PPTN…ETVS. An N-linked (GlcNAc...) asparagine glycan is attached at Asn-54. Cystine bridges form between Cys-67/Cys-125, Cys-174/Cys-231, and Cys-279/Cys-331. 2 N-linked (GlcNAc...) asparagine glycosylation sites follow: Asn-370 and Asn-415. Cys-375 and Cys-431 are disulfide-bonded. Ser-446 is subject to Phosphoserine. Cysteines 479 and 542 form a disulfide. The segment at 491 to 516 is disordered; that stretch reads TWLKDSRPVNDPRQSQEPRRVQLGSV. Over residues 494–510 the composition is skewed to basic and acidic residues; that stretch reads KDSRPVNDPRQSQEPRR. Residues Asn-561, Asn-578, Asn-591, and Asn-722 are each glycosylated (N-linked (GlcNAc...) asparagine). Residues Cys-581 and Cys-637 are joined by a disulfide bond. 2 consecutive Ig-like C2-type domains span residues 754 to 846 and 852 to 953; these read PTIR…LVRL and PQVD…VSIS. 2 disulfides stabilise this stretch: Cys-775–Cys-830 and Cys-877–Cys-934. Residues 957 to 1051 enclose the Fibronectin type-III domain; sequence PPLGLKVVSV…GIQVSITTPG (95 aa). The tract at residues 1048–1071 is disordered; the sequence is TTPGLDQAPEDTDQPLPTEQPPGP. The helical transmembrane segment at 1079 to 1099 threads the bilayer; that stretch reads VLFAVGGLLLLSNASCVGGLL. At 1100–1256 the chain is on the cytoplasmic side; the sequence is WRRRLRRLAE…LPFELRGHLV (157 aa). Ser-1112 carries the post-translational modification Phosphoserine. Residues 1112–1128 show a composition bias toward basic and acidic residues; sequence SEKTEAGSEEDRIRNEY. The interval 1112–1143 is disordered; sequence SEKTEAGSEEDRIRNEYEESQWTGDRDTRSST. Residue Thr-1115 is modified to Phosphothreonine. Position 1119 is a phosphoserine (Ser-1119). Tyr-1208 bears the Phosphotyrosine; by FYN mark.

Belongs to the immunoglobulin superfamily. In terms of assembly, interacts with NPHS2 and with CD2AP (via C-terminal domain). Interacts with MAGI1 (via PDZ 2 and 3 domains) forming a tripartite complex with IGSF5/JAM4. Forms a complex with ACTN4, CASK, IQGAP1, MAGI2, SPTAN1 and SPTBN1. Interacts with DDN; the interaction is direct. Self-associates (via the Ig-like domains). Also interacts (via the Ig-like domains) with KIRREL1 and KIRREL2; the interaction with KIRREL1 is dependent on KIRREL1 glycosylation. Interacts with KIRREL3. Interacts with phosphatidylinositol 3-kinase regulatory subunit PIK3R1; the interaction is reduced by high glucose levels. Phosphorylated at Tyr-1208 by FYN, leading to the recruitment and activation of phospholipase C-gamma-1/PLCG1. Tyrosine phosphorylation is reduced by high glucose levels. Dephosphorylated by tensin TNS2 which leads to reduced binding of NPHN1 to PIK3R1. In terms of tissue distribution, expressed in kidney glomeruli. In the embryo, expressed in the mesonephric kidney at 11 dpc with strong expression in cranial tubules with podocyte-like structures. Expression is observed in the podocytes of the developing kidney from 13 dpc. High expression is also detected in the developing cerebellum, hindbrain, spinal cord, retina and hypothalamus. Expressed in skeletal muscle during myoblast fusion such as in the adult following acute injury and in the embryo but not detected in uninjured adult skeletal muscle. Isoform 1 and isoform 2 are expressed in the newborn brain and developing cerebellum. Isoform 1 is the predominant isoform in adult kidney.

The protein localises to the cell membrane. Seems to play a role in the development or function of the kidney glomerular filtration barrier. Regulates glomerular vascular permeability. May anchor the podocyte slit diaphragm to the actin cytoskeleton. Plays a role in skeletal muscle formation through regulation of myoblast fusion. The chain is Nephrin (Nphs1) from Mus musculus (Mouse).